Reading from the N-terminus, the 384-residue chain is Ceramide very long chain fatty acid hydroxylase SCS7 (384 aa).

At 1-197 (MSTNTSKTLE…NFLEPLTKTA (197 aa)) the chain is on the cytoplasmic side. One can recognise a Cytochrome b5 heme-binding domain in the interval 9–90 (LELFSKKTVQ…EDEYLIGYLA (82 aa)). Residues H45 and H72 each contribute to the heme site. A helical membrane pass occupies residues 198–216 (WWVVPVAWLPVVVYHMGVA). Over 217–221 (LKNMN) the chain is Lumenal. A helical membrane pass occupies residues 222–246 (QLFACFLFCVGVFVWTLIEYGLHRF). Residues H244, H249, H268, H271, and H272 each contribute to the Zn(2+) site. At 247 to 284 (LFHFDDWLPESNIAFATHFLLHGCHHYLPMDKYRLVMP) the chain is on the cytoplasmic side. Residues 285 to 302 (PTLFVILCAPFYKLVFAL) traverse the membrane as a helical segment. Topologically, residues 303-304 (LP) are lumenal. Residues 305–328 (LYWAYAGFAGGLFGYVCYDECHFF) traverse the membrane as a helical segment. Zn(2+) is bound by residues H326, H330, H345, H348, and H349. At 329 to 384 (LHHSKLPPFMRKLKKYHLEHHYKNYQLGFGVTSWFWDEVFGTYLGPDAPLSKMKYE) the chain is on the cytoplasmic side.

This sequence belongs to the sterol desaturase family. SCS7 subfamily. Zn(2+) serves as cofactor.

The protein localises to the endoplasmic reticulum membrane. It catalyses the reaction an N-(1,2 saturated acyl)-(4R)-hydroxysphinganine + 2 Fe(II)-[cytochrome b5] + O2 + 2 H(+) = an N-(2R-hydroxyacyl)-4R-hydroxysphinganine + 2 Fe(III)-[cytochrome b5] + H2O. The enzyme catalyses an N-(1,2-saturated acyl)sphinganine + 2 Fe(II)-[cytochrome b5] + O2 + 2 H(+) = an N-[(2'R)-hydroxyacyl]sphinganine + 2 Fe(III)-[cytochrome b5] + H2O. The catalysed reaction is N-hexacosanoyl-(4R)-hydroxysphinganine + 2 Fe(II)-[cytochrome b5] + O2 + 2 H(+) = N-(2-hydroxyhexacosanyl)-(4R)-hydroxysphinganine + 2 Fe(III)-[cytochrome b5] + H2O. Its pathway is sphingolipid metabolism. Its function is as follows. Ceramide hydroxylase involved in the hydroxylation of sphingolipid-associated very long chain fatty acids. Postulated to hydroxylate the very long chain fatty acid of dihydroceramides and phytoceramides at C-2. The chain is Ceramide very long chain fatty acid hydroxylase SCS7 from Saccharomyces cerevisiae (strain ATCC 204508 / S288c) (Baker's yeast).